A 522-amino-acid chain; its full sequence is Sterol O-acyltransferase 2 (522 aa).

2 disordered regions span residues 1-36 and 74-96; these read MEPG…HRAP and SYPS…TQEP. At 1–120 the chain is on the cytoplasmic side; sequence MEPGGARLRL…LDELMEVQHF (120 aa). Residues 17–36 are compositionally biased toward basic and acidic residues; sequence GGERERQPCGDGNTETHRAP. Residue histidine 119 coordinates cholesterol. The helical transmembrane segment at 121 to 142 threads the bilayer; it reads RTIYHMFIAGLCVFIISTLAID. The Lumenal segment spans residues 143-162; that stretch reads FIDEGRLLLEFDLLIFSFGQ. Residues 163–188 form a helical membrane-spanning segment; it reads LPLALVTWVPMFLSTLLAPYQALRLW. The Cytoplasmic portion of the chain corresponds to 189-196; that stretch reads ARGTWTQA. A helical membrane pass occupies residues 197-220; sequence TGLGCALLAAHAVVLCALPVHVAV. Over 221–228 the chain is Lumenal; that stretch reads EHQLPPAS. The helical transmembrane segment at 229-252 threads the bilayer; the sequence is RCVLVFEQVRFLMKSYSFLREAVP. The Cytoplasmic portion of the chain corresponds to 253 to 293; sequence GTLRARRGEGIQAPSFSSYLYFLFCPTLIYRETYPRTPYVR. Position 277 is a cysteine sulfenic acid (-SOH); alternate (cysteine 277). Residue cysteine 277 forms a Glycyl cysteine thioester (Cys-Gly) (interchain with G-Cter in ubiquitin); alternate linkage. The chain crosses the membrane as a helical span at residues 294 to 326; it reads WNYVAKNFAQALGCVLYACFILGRLCVPVFANM. The Lumenal portion of the chain corresponds to 327–343; sequence SREPFSTRALVLSILHA. The helical transmembrane segment at 344–369 threads the bilayer; it reads TLPGIFMLLLIFFAFLHCWLNAFAEM. Residues 370 to 417 are Cytoplasmic-facing; sequence LRFGDRMFYRDWWNSTSFSNYYRTWNVVVHDWLYSYVYQDGLRLLGAR. An FYXDWWN motif motif is present at residues 377–383; the sequence is FYRDWWN. An acyl-CoA is bound by residues asparagine 389, arginine 392, asparagine 395, histidine 399, tyrosine 407, and serine 430. A helical transmembrane segment spans residues 418–442; sequence ARGVAMLGVFLVSAVAHEYIFCFVL. Histidine 434 is a catalytic residue. Residues 443–448 lie on the Lumenal side of the membrane; the sequence is GFFYPV. Residues 449 to 464 form a helical membrane-spanning segment; it reads MLILFLVIGGMLNFMM. The Cytoplasmic portion of the chain corresponds to 465–470; that stretch reads HDQRTG. A helical transmembrane segment spans residues 471-502; that stretch reads PAWNVLMWTMLFLGQGIQVSLYCQEWYARRHC. The Lumenal segment spans residues 503–522; the sequence is PLPQATFWGLVTPRSWSCHT.

It belongs to the membrane-bound acyltransferase family. Sterol o-acyltransferase subfamily. In terms of assembly, may form homo- or heterodimers. Interacts with INSIG1; the interaction is direct and promotes association with AMFR/gp78. Polyubiquitinated by AMFR/gp78 at Cys-277, leading to its degradation when the lipid levels are low. Association with AMFR/gp78 is mediated via interaction with INSIG1. High concentration of cholesterol and fatty acid results in Cys-277 oxidation, preventing ubiquitination at the same site, resulting in protein stabilization. Post-translationally, oxidized at Cys-277: high concentration of cholesterol and fatty acid induce reactive oxygen species, which oxidizes Cys-277, preventing ubiquitination at the same site, and resulting in protein stabilization. In terms of tissue distribution, expression seems confined in hepatocytes and enterocytes.

It is found in the endoplasmic reticulum membrane. The catalysed reaction is a sterol + a long-chain fatty acyl-CoA = a long-chain 3-hydroxysterol ester + CoA. It catalyses the reaction cholesterol + an acyl-CoA = a cholesterol ester + CoA. The enzyme catalyses cholesterol + (9Z)-octadecenoyl-CoA = cholesteryl (9Z-octadecenoate) + CoA. It carries out the reaction (5Z,8Z,11Z,14Z,17Z)-eicosapentaenoyl-CoA + cholesterol = (5Z,8Z,11Z,14Z,17Z-eicosapentaenoyl)-cholesterol + CoA. The catalysed reaction is (9Z,12Z,15Z)-octadecatrienoyl-CoA + cholesterol = (9Z,12Z,15Z-octadecatrienoyl)-cholesterol + CoA. It catalyses the reaction (5Z,8Z,11Z,14Z)-eicosatetraenoyl-CoA + cholesterol = cholesteryl (5Z,8Z,11Z,14Z)-eicosatetraenoate + CoA. Catalyzes the formation of fatty acid-cholesterol esters, which are less soluble in membranes than cholesterol. Plays a role in lipoprotein assembly and dietary cholesterol absorption. Utilizes oleoyl-CoA ((9Z)-octadecenoyl-CoA) and linolenoyl-CoA ((9Z,12Z,15Z)-octadecatrienoyl-CoA) as substrates. May provide cholesteryl esters for lipoprotein secretion from hepatocytes and intestinal mucosa. Functionally, has lower enzymatic activity compared to isoform 1. In Homo sapiens (Human), this protein is Sterol O-acyltransferase 2.